The primary structure comprises 425 residues: Putative type I restriction enzyme MjaX specificity subunit (425 aa).

It belongs to the type-I restriction system S methylase family.

In terms of biological role, a putative specificity (S) subunit of a type I restriction enzyme thought to recognize 5'-TAGN(6)TGC-3'; the other subunits are unknown. In Methanocaldococcus jannaschii (strain ATCC 43067 / DSM 2661 / JAL-1 / JCM 10045 / NBRC 100440) (Methanococcus jannaschii), this protein is Putative type I restriction enzyme MjaX specificity subunit.